We begin with the raw amino-acid sequence, 661 residues long: UvrABC system protein B (661 aa).

Residues 31–186 form the Helicase ATP-binding domain; sequence DNIEGGEKAQ…LLNALVDIQF (156 aa). 44–51 serves as a coordination point for ATP; the sequence is GATGTGKT. A Beta-hairpin motif is present at residues 97-120; the sequence is YYDYYQPEAYVPSSDTYIEKDSSV. The Helicase C-terminal domain occupies 435–601; sequence QMDDLLGEIN…TIKKEIRDLI (167 aa). The region spanning 626–661 is the UVR domain; sequence KAMIKKLEGQMQEAAEVLDFELAAQIRDMVIELKNM.

The protein belongs to the UvrB family. In terms of assembly, forms a heterotetramer with UvrA during the search for lesions. Interacts with UvrC in an incision complex.

The protein resides in the cytoplasm. In terms of biological role, the UvrABC repair system catalyzes the recognition and processing of DNA lesions. A damage recognition complex composed of 2 UvrA and 2 UvrB subunits scans DNA for abnormalities. Upon binding of the UvrA(2)B(2) complex to a putative damaged site, the DNA wraps around one UvrB monomer. DNA wrap is dependent on ATP binding by UvrB and probably causes local melting of the DNA helix, facilitating insertion of UvrB beta-hairpin between the DNA strands. Then UvrB probes one DNA strand for the presence of a lesion. If a lesion is found the UvrA subunits dissociate and the UvrB-DNA preincision complex is formed. This complex is subsequently bound by UvrC and the second UvrB is released. If no lesion is found, the DNA wraps around the other UvrB subunit that will check the other stand for damage. The sequence is that of UvrABC system protein B from Streptococcus suis (strain 98HAH33).